Reading from the N-terminus, the 494-residue chain is Cheilanthifoline synthase (494 aa).

The chain crosses the membrane as a helical span at residues 4-24 (TIWLIISTVIIVLGIAKFLLG). Position 437 (Cys437) interacts with heme.

It belongs to the cytochrome P450 family. Requires heme as cofactor. As to expression, expressed in roots and at lower levels in stems, leaves and plantlets.

The protein localises to the endoplasmic reticulum membrane. It catalyses the reaction (S)-scoulerine + reduced [NADPH--hemoprotein reductase] + O2 = (S)-cheilanthifoline + oxidized [NADPH--hemoprotein reductase] + 2 H2O + H(+). In terms of biological role, methylenedioxy bridge-forming cytochrome P450 involved in the biosynthesis of isoquinoline alkaloids. Converts (S)-scoulerine into (S)-cheilanthifoline, a precursor of sanguinarine. Catalyzes an oxidative reaction that does not incorporate oxygen into the product. In Argemone mexicana (Mexican prickly poppy), this protein is Cheilanthifoline synthase.